Reading from the N-terminus, the 131-residue chain is Type-5 thionin (131 aa).

Residues 1-29 (MGGGQKGLESAIVCLLVLGLVLEQVQVEG) form the signal peptide. The propeptide at 67 to 131 (LASVRSSDEP…GDTLLASLDD (65 aa)) is acidic domain.

The protein belongs to the plant thionin (TC 1.C.44) family. Is disulfide-linked. As to expression, developing endosperm.

It localises to the secreted. Its function is as follows. Thionins are small plant proteins which are toxic to animal cells. They seem to exert their toxic effect at the level of the cell membrane. Their precise function is not known. The sequence is that of Type-5 thionin (TTHV) from Triticum aestivum (Wheat).